A 195-amino-acid polypeptide reads, in one-letter code: ATP-dependent Clp protease proteolytic subunit (195 aa).

Catalysis depends on Ser101, which acts as the Nucleophile. Residue His126 is part of the active site.

It belongs to the peptidase S14 family. Component of the chloroplastic Clp protease core complex.

It is found in the plastid. It localises to the chloroplast stroma. It carries out the reaction Hydrolysis of proteins to small peptides in the presence of ATP and magnesium. alpha-casein is the usual test substrate. In the absence of ATP, only oligopeptides shorter than five residues are hydrolyzed (such as succinyl-Leu-Tyr-|-NHMec, and Leu-Tyr-Leu-|-Tyr-Trp, in which cleavage of the -Tyr-|-Leu- and -Tyr-|-Trp bonds also occurs).. Functionally, cleaves peptides in various proteins in a process that requires ATP hydrolysis. Has a chymotrypsin-like activity. Plays a major role in the degradation of misfolded proteins. This Oltmannsiellopsis viridis (Marine flagellate) protein is ATP-dependent Clp protease proteolytic subunit.